The primary structure comprises 121 residues: uncharacterized protein (121 aa).

The interval S101 to A121 is disordered. Residues E111 to A121 are compositionally biased toward basic and acidic residues.

Its subcellular location is the mitochondrion. This is an uncharacterized protein from Arabidopsis thaliana (Mouse-ear cress).